The following is a 192-amino-acid chain: Crossover junction endodeoxyribonuclease RuvC (192 aa).

Residues aspartate 8, glutamate 67, and aspartate 139 contribute to the active site. Residues aspartate 8, glutamate 67, and aspartate 139 each contribute to the Mg(2+) site.

This sequence belongs to the RuvC family. In terms of assembly, homodimer which binds Holliday junction (HJ) DNA. The HJ becomes 2-fold symmetrical on binding to RuvC with unstacked arms; it has a different conformation from HJ DNA in complex with RuvA. In the full resolvosome a probable DNA-RuvA(4)-RuvB(12)-RuvC(2) complex forms which resolves the HJ. Mg(2+) serves as cofactor.

Its subcellular location is the cytoplasm. It catalyses the reaction Endonucleolytic cleavage at a junction such as a reciprocal single-stranded crossover between two homologous DNA duplexes (Holliday junction).. Its function is as follows. The RuvA-RuvB-RuvC complex processes Holliday junction (HJ) DNA during genetic recombination and DNA repair. Endonuclease that resolves HJ intermediates. Cleaves cruciform DNA by making single-stranded nicks across the HJ at symmetrical positions within the homologous arms, yielding a 5'-phosphate and a 3'-hydroxyl group; requires a central core of homology in the junction. The consensus cleavage sequence is 5'-(A/T)TT(C/G)-3'. Cleavage occurs on the 3'-side of the TT dinucleotide at the point of strand exchange. HJ branch migration catalyzed by RuvA-RuvB allows RuvC to scan DNA until it finds its consensus sequence, where it cleaves and resolves the cruciform DNA. The chain is Crossover junction endodeoxyribonuclease RuvC from Haemophilus ducreyi (strain 35000HP / ATCC 700724).